The following is a 417-amino-acid chain: MLKRDMNIADYDADLWQAMEQEKVRQEEHIELIASENYTSPRVMQAQGSQLTNKYAEGYPGKRYYGGCEHVDIVEQLAIERAKELFGADYANVQPHSGSQANFAVYTALLQPGDTILGMNLAHGGHLTHGSPVNLSGKLYNVIPYGIDETGKIDYNELAELAKEHQPKMIVGGFSAYSGICDWEKMREIADSIGAYLFVDMAHVAGLVAADVYPNPVPHAHIVTTTTHKTLAGPRGGLILAKGGDEDLYKKLNSGVFPGSQGGPLMHVIAGKAVAFKEAMEPEFKTYQQQVAKNAKAMVEVFLARGYNVVSGGTHNHLFLLDLVDKNLTGKEADAALGRANITVNKNSVPNDPKSPFVTSGIRIGSPAVTRRGFKEAEVRELAGWISDILDNITDEGVSERVKKQVLDICARFPVYA.

(6S)-5,6,7,8-tetrahydrofolate-binding positions include leucine 121 and 125–127 (GHL). At lysine 229 the chain carries N6-(pyridoxal phosphate)lysine. 355–357 (SPF) is a binding site for (6S)-5,6,7,8-tetrahydrofolate.

The protein belongs to the SHMT family. Homodimer. It depends on pyridoxal 5'-phosphate as a cofactor.

It is found in the cytoplasm. It catalyses the reaction (6R)-5,10-methylene-5,6,7,8-tetrahydrofolate + glycine + H2O = (6S)-5,6,7,8-tetrahydrofolate + L-serine. It participates in one-carbon metabolism; tetrahydrofolate interconversion. It functions in the pathway amino-acid biosynthesis; glycine biosynthesis; glycine from L-serine: step 1/1. In terms of biological role, catalyzes the reversible interconversion of serine and glycine with tetrahydrofolate (THF) serving as the one-carbon carrier. This reaction serves as the major source of one-carbon groups required for the biosynthesis of purines, thymidylate, methionine, and other important biomolecules. Also exhibits THF-independent aldolase activity toward beta-hydroxyamino acids, producing glycine and aldehydes, via a retro-aldol mechanism. The sequence is that of Serine hydroxymethyltransferase from Erwinia tasmaniensis (strain DSM 17950 / CFBP 7177 / CIP 109463 / NCPPB 4357 / Et1/99).